The sequence spans 396 residues: MAKAKFERTKPHVNIGTIGHVDHGKTTLTAAISKVLYDQYPDLNEQRDFASIDSAPEERQRGITINISHVEYQTEKRHYAHVDAPGHADYIKNMITGAAQMDGAILVVAATDGPMAQTREHVLLARQVGVPYLLVALNKSDMVDDEELLDLVEMEVRELLSSQGFDGDEAPVVRVSGLKALEGDPVWVKSVQDLMAAVDESVPDPVRDRDKPFLMPIEDVFTITGRGTVVTGRAERGTLAINSEVEIVGIRPIQKTTVTGIEMFHKQLDEAWAGENCGLLLRGLKRDDVERGQVVVKPGSITPHTDFEANVYILSKDEGGRHNPFYSNYRPQFYFRTTDVTGVITLPEGTEMVMPGDNTEMTVALIQPIAMEEGLGFAIREGGRTVGSGRVTSIIK.

A tr-type G domain is found at 10–206; the sequence is KPHVNIGTIG…AVDESVPDPV (197 aa). The G1 stretch occupies residues 19-26; the sequence is GHVDHGKT. 19–26 is a GTP binding site; that stretch reads GHVDHGKT. Position 26 (T26) interacts with Mg(2+). Residues 62–66 are G2; it reads GITIN. The interval 83–86 is G3; that stretch reads DAPG. Residues 83 to 87 and 138 to 141 each bind GTP; these read DAPGH and NKSD. A G4 region spans residues 138–141; that stretch reads NKSD. The interval 176 to 178 is G5; that stretch reads SGL.

The protein belongs to the TRAFAC class translation factor GTPase superfamily. Classic translation factor GTPase family. EF-Tu/EF-1A subfamily. In terms of assembly, monomer.

The protein resides in the cytoplasm. It catalyses the reaction GTP + H2O = GDP + phosphate + H(+). GTP hydrolase that promotes the GTP-dependent binding of aminoacyl-tRNA to the A-site of ribosomes during protein biosynthesis. The polypeptide is Elongation factor Tu (Paenarthrobacter aurescens (strain TC1)).